The primary structure comprises 699 residues: Proline-rich receptor-like protein kinase PERK7 (699 aa).

The disordered stretch occupies residues 1–167 (MAEGQSPENS…TSNSGSNSSS (167 aa)). Over 1–172 (MAEGQSPENS…SNSSSNDGLN (172 aa)) the chain is Extracellular. 2 stretches are compositionally biased toward pro residues: residues 9–23 (NSPP…PSPP) and 43–68 (SPPP…PPLP). An N-linked (GlcNAc...) asparagine glycan is attached at Asn70. The segment covering 100–121 (PPQQSDNNGNKGNNNENNKGND) has biased composition (low complexity). An N-linked (GlcNAc...) asparagine glycan is attached at Asn131. The span at 148-158 (HSQPRSLAPPT) shows a compositional bias: polar residues. The N-linked (GlcNAc...) asparagine glycan is linked to Asn164. A helical transmembrane segment spans residues 173–193 (IGAVIGLVAAAGILFIVMILL). Residues 194–699 (CVCCFRKKKK…SKTTTTNRGI (506 aa)) lie on the Cytoplasmic side of the membrane. Thr325 carries the phosphothreonine modification. Residues 336–615 (FSKDRLLGQG…VRTLEGDASL (280 aa)) enclose the Protein kinase domain. Residues 342–350 (LGQGGFGYV) and Lys364 each bind ATP. The residue at position 410 (Tyr410) is a Phosphotyrosine. Residue Asp461 is the Proton acceptor of the active site. 2 positions are modified to phosphoserine: Ser465 and Ser494. 2 positions are modified to phosphothreonine: Thr495 and Thr500. Position 508 is a phosphotyrosine (Tyr508). 2 disordered regions span residues 609–639 (LEGD…DYEM) and 658–699 (DYGA…NRGI). Residues 687 to 699 (GSTSKTTTTNRGI) show a composition bias toward polar residues.

It belongs to the protein kinase superfamily. Ser/Thr protein kinase family. Mostly expressed in flower buds.

The protein localises to the cell membrane. It carries out the reaction L-seryl-[protein] + ATP = O-phospho-L-seryl-[protein] + ADP + H(+). It catalyses the reaction L-threonyl-[protein] + ATP = O-phospho-L-threonyl-[protein] + ADP + H(+). The sequence is that of Proline-rich receptor-like protein kinase PERK7 (PERK7) from Arabidopsis thaliana (Mouse-ear cress).